Consider the following 860-residue polypeptide: Leucine--tRNA ligase (860 aa).

A 'HIGH' region motif is present at residues 42 to 52 (PYPSGRLHMGH). Positions 619–623 (KMSKS) match the 'KMSKS' region motif. Lys622 contributes to the ATP binding site.

This sequence belongs to the class-I aminoacyl-tRNA synthetase family.

The protein localises to the cytoplasm. The catalysed reaction is tRNA(Leu) + L-leucine + ATP = L-leucyl-tRNA(Leu) + AMP + diphosphate. This Erwinia tasmaniensis (strain DSM 17950 / CFBP 7177 / CIP 109463 / NCPPB 4357 / Et1/99) protein is Leucine--tRNA ligase.